The following is a 174-amino-acid chain: Probable phenolic acid decarboxylase (174 aa).

Belongs to the PadC family.

In terms of biological role, catalyzes the decarboxylation of phenolic acids. This is Probable phenolic acid decarboxylase (padC) from Vibrio cholerae serotype O1 (strain ATCC 39315 / El Tor Inaba N16961).